The sequence spans 34 residues: Photosystem II reaction center protein Psb30 (34 aa).

A helical membrane pass occupies residues 6–26; that stretch reads VIGQLVSTGLIGLLGPAVIIL.

This sequence belongs to the Psb30/Ycf12 family. In terms of assembly, PSII is composed of 1 copy each of membrane proteins PsbA, PsbB, PsbC, PsbD, PsbE, PsbF, PsbH, PsbI, PsbJ, PsbK, PsbL, PsbM, PsbT, PsbX, PsbY, PsbZ, Psb30/Ycf12, peripheral proteins of the oxygen-evolving complex and a large number of cofactors. It forms dimeric complexes.

It is found in the plastid. The protein resides in the chloroplast thylakoid membrane. Its function is as follows. A core subunit of photosystem II (PSII), probably helps stabilize the reaction center. In Skeletonema costatum (Marine centric diatom), this protein is Photosystem II reaction center protein Psb30.